The chain runs to 339 residues: Adenylosuccinate synthetase (339 aa).

Residues 12–18 (GDEGKGS) and 42–44 (GHS) contribute to the GTP site. Asp13 serves as the catalytic Proton acceptor. Residues Asp13 and Gly42 each coordinate Mg(2+). IMP contacts are provided by residues 13 to 16 (DEGK), 40 to 43 (NAGH), Thr127, Arg141, Gln179, Thr194, and Arg256. His43 serves as the catalytic Proton donor. 252-258 (TVTGRRR) is a substrate binding site. Residues Arg258, 284–286 (MLD), and 324–326 (KTG) each bind GTP.

Belongs to the adenylosuccinate synthetase family. As to quaternary structure, homodimer. Mg(2+) serves as cofactor.

The protein localises to the cytoplasm. The enzyme catalyses IMP + L-aspartate + GTP = N(6)-(1,2-dicarboxyethyl)-AMP + GDP + phosphate + 2 H(+). It participates in purine metabolism; AMP biosynthesis via de novo pathway; AMP from IMP: step 1/2. In terms of biological role, plays an important role in the de novo pathway of purine nucleotide biosynthesis. Catalyzes the first committed step in the biosynthesis of AMP from IMP. This Thermococcus onnurineus (strain NA1) protein is Adenylosuccinate synthetase.